The sequence spans 342 residues: D-erythrose-4-phosphate dehydrogenase (342 aa).

NAD(+) is bound at residue 12 to 13 (RI). Residues 154–156 (SCT), Arg-200, 213–214 (TK), and Arg-236 each bind substrate. Cys-155 acts as the Nucleophile in catalysis. NAD(+) is bound at residue Asn-318.

It belongs to the glyceraldehyde-3-phosphate dehydrogenase family. Epd subfamily. Homotetramer.

It localises to the cytoplasm. It catalyses the reaction D-erythrose 4-phosphate + NAD(+) + H2O = 4-phospho-D-erythronate + NADH + 2 H(+). Its pathway is cofactor biosynthesis; pyridoxine 5'-phosphate biosynthesis; pyridoxine 5'-phosphate from D-erythrose 4-phosphate: step 1/5. In terms of biological role, catalyzes the NAD-dependent conversion of D-erythrose 4-phosphate to 4-phosphoerythronate. This is D-erythrose-4-phosphate dehydrogenase from Salmonella arizonae (strain ATCC BAA-731 / CDC346-86 / RSK2980).